Consider the following 244-residue polypeptide: U11/U12 small nuclear ribonucleoprotein 35 kDa protein (244 aa).

The RRM domain maps to 51–129 (LTLFVARLNS…HEIFVDYELE (79 aa)). Residues 146 to 162 (GKKESGQLRFGGRDRPF) show a composition bias toward basic and acidic residues. Positions 146–244 (GKKESGQLRF…KTRDKRDRSK (99 aa)) are disordered. A Glycyl lysine isopeptide (Lys-Gly) (interchain with G-Cter in SUMO2) cross-link involves residue K172. Basic and acidic residues-rich tracts occupy residues 173 to 185 (NEPH…ERRE) and 192 to 244 (RHWD…DRSK).

As to quaternary structure, component of the U11/U12 snRNPs that are part of the U12-type spliceosome.

It is found in the nucleus. The sequence is that of U11/U12 small nuclear ribonucleoprotein 35 kDa protein (Snrnp35) from Rattus norvegicus (Rat).